Here is a 538-residue protein sequence, read N- to C-terminus: Natural resistance-associated macrophage protein 1 (538 aa).

Residues 1–36 form a disordered region; that stretch reads MTGDTDPPKQSRTQYGSISSSPSPGPPQVPPGGTYL. The Cytoplasmic segment spans residues 1–54; that stretch reads MTGDTDPPKQSRTQYGSISSSPSPGPPQVPPGGTYLSEKIPIPNAEPGTFSLRK. Residues 55-75 traverse the membrane as a helical segment; that stretch reads LWAFTGPGFLMSIAYLDPGNI. The Extracellular portion of the chain corresponds to 76–81; sequence QSDLQA. A helical transmembrane segment spans residues 82–102; sequence GAVAGFKLLWVLLWATVLGLL. At 103–139 the chain is on the cytoplasmic side; that stretch reads CQRLAARLGVVTGKDLGEICHLYYPKVPRTLLWLNME. The helical transmembrane segment at 140–160 threads the bilayer; the sequence is LAIVGSDMQEVIGTAIAFNLL. Topologically, residues 161 to 164 are extracellular; that stretch reads SAGR. A helical membrane pass occupies residues 165 to 185; that stretch reads IPLWGGVLITVVDTFFFLYLN. Topologically, residues 186–193 are cytoplasmic; it reads NYGLRKLE. A helical membrane pass occupies residues 194–214; sequence AFFAFLIAIMAFTFGYEYVVA. At 215 to 240 the chain is on the extracellular side; sequence RPAQGALLRGLFLPSCSGCGQPELLQ. A helical membrane pass occupies residues 241–261; it reads AVGIVGAIIMPHNIYLHSALV. At 262–286 the chain is on the cytoplasmic side; sequence KSREVDRTRREDIREANMYFLIEST. Residues 287–307 form a helical membrane-spanning segment; the sequence is IALFVSFFINLFVMAVFGQAF. At 308–346 the chain is on the extracellular side; sequence YQQTNQAAFNICANSSLHDYAKIFPRNNLTVAVDFYQGG. 2 N-linked (GlcNAc...) asparagine glycosylation sites follow: asparagine 321 and asparagine 335. Residues 347–367 form a helical membrane-spanning segment; that stretch reads VILGCLFGPAALYIWAVGLLA. The Cytoplasmic portion of the chain corresponds to 368 to 394; that stretch reads AGQSSTMTGTYAGQFVMEGFLKLRWSR. Residues 395-415 traverse the membrane as a helical segment; sequence FARLLLTRSCAILPALLVAVF. The Extracellular segment spans residues 416 to 432; that stretch reads KELQDLSSLNDLLNVLQ. A helical membrane pass occupies residues 433–453; the sequence is SLLLPFAVLPILTFTSMPALM. At 454–468 the chain is on the cytoplasmic side; that stretch reads QEFASGRVNKVITSS. The chain crosses the membrane as a helical span at residues 469–489; sequence IMLLVCAINFYFLVSYLPSLP. The Extracellular segment spans residues 490–492; that stretch reads HPA. Residues 493 to 513 form a helical membrane-spanning segment; it reads YFGLVALLAVIYLGLTTYLVW. The Cytoplasmic segment spans residues 514–538; that stretch reads TCLIAHGATLLVHSSHQHFLYGLLE.

This sequence belongs to the NRAMP family.

It localises to the late endosome membrane. The protein resides in the lysosome membrane. It catalyses the reaction Zn(2+)(in) + H(+)(out) = Zn(2+)(out) + H(+)(in). The catalysed reaction is Fe(2+)(in) + H(+)(out) = Fe(2+)(out) + H(+)(in). It carries out the reaction Mn(2+)(in) + H(+)(out) = Mn(2+)(out) + H(+)(in). In terms of biological role, macrophage-specific antiporter that fluxes metal ions in either direction against a proton gradient. Localized to late endosomal lysosomal membranes, delivers bivalent cations from the cytosol into these acidic compartments where they may directly affect antimicrobial activity. Involved in iron metabolism and host natural resistance to infection with intracellular parasites. Pathogen resistance involves sequestration of Fe(2+) and Mn(2+), cofactors of both prokaryotic and eukaryotic catalases and superoxide dismutases, not only to protect the macrophage against its own generation of reactive oxygen species, but to deny the cations to the pathogen for synthesis of its protective enzymes. The protein is Natural resistance-associated macrophage protein 1 (SLC11A1) of Sus scrofa (Pig).